Consider the following 247-residue polypeptide: Segregation and condensation protein A (247 aa).

Belongs to the ScpA family. As to quaternary structure, component of a cohesin-like complex composed of ScpA, ScpB and the Smc homodimer, in which ScpA and ScpB bind to the head domain of Smc. The presence of the three proteins is required for the association of the complex with DNA.

Its subcellular location is the cytoplasm. In terms of biological role, participates in chromosomal partition during cell division. May act via the formation of a condensin-like complex containing Smc and ScpB that pull DNA away from mid-cell into both cell halves. This chain is Segregation and condensation protein A, found in Bacillus cereus (strain AH187).